The chain runs to 238 residues: Probable transcriptional regulatory protein CPn_0573/CP_0176/CPj0573/CpB0595 (238 aa).

Residues 1–20 (MAGHSKWANTKHRKERADHK) are disordered. The span at 9 to 20 (NTKHRKERADHK) shows a compositional bias: basic residues.

Belongs to the TACO1 family.

It is found in the cytoplasm. This Chlamydia pneumoniae (Chlamydophila pneumoniae) protein is Probable transcriptional regulatory protein CPn_0573/CP_0176/CPj0573/CpB0595.